Consider the following 595-residue polypeptide: ATPase family AAA domain-containing protein 3 (595 aa).

Positions 1–48 (MSWLFGVQKNATPQIPDDFQAGAAPGGPQQPGQGQRQEGNSKMAYSFD) are disordered. Over 1-243 (MSWLFGVQKN…LNQFLNDKTK (243 aa)) the chain is Mitochondrial intermembrane. A compositionally biased stretch (low complexity) spans 20 to 35 (QAGAAPGGPQQPGQGQ). 2 coiled-coil regions span residues 80–107 (VTRQ…HIRV) and 140–175 (EELA…EHEL). The chain crosses the membrane as a helical span at residues 244 to 260 (IAAAVGGLTALAVGWYT). The Mitochondrial matrix segment spans residues 261–595 (AKRGTGVTAR…GTTLKRETAV (335 aa)). Residue 349 to 356 (GPPGTGKT) participates in ATP binding. The short motif at 592 to 595 (ETAV) is the PDZ-binding element.

Belongs to the AAA ATPase family.

It is found in the mitochondrion inner membrane. Its subcellular location is the mitochondrion matrix. The protein localises to the mitochondrion nucleoid. In terms of biological role, essential for mitochondrial network organization, mitochondrial metabolism and cell growth at organism and cellular level. Important during development for the up-regulation of mitochondrial activity during the transition to higher larval stages. Regulates mitochondrial iron homeostasis. May play an important role in mitochondrial protein synthesis. May also participate in mitochondrial DNA replication. May bind to mitochondrial DNA D-loops and contribute to nucleoid stability. Plays a role in regulating the production of reactive oxygen species in response to heat stress. This is ATPase family AAA domain-containing protein 3 from Caenorhabditis elegans.